A 483-amino-acid chain; its full sequence is MKYTATIGLEVHAQILTKSKMFSGCNAAYASAPANSCIDEVSIGLPGTLPVVNQEAIRKAALLGLALNCEIPEYCEFSRKSYTYPDLPKAWQITMYDKPICINGELEITLGNGETKRVGITRAHLEEDTGMLQHGDETHSLVDYNRSGVPLLEIVSEPDMTTPEEARLYATKLRQILVFLGVNSGNLEEGALRVDANVSIRPEGQKEFGTKVEIKNMNSFRNLERALVYELERQEKVLREGGTIIQETRGWDDAAGITLSQRSKEHAHDYRYFPEPDLPPLELSREWVAERRAELPELPDAKFARYLSEFGLSKQDAALLSGERETADYFETIVATAGAANAKPVANWITGELFRLIKDGAETLAEVAKRVTPANLTSLIDVVAKGEIGSTVAKQVFEEMYRTGETPTAIINAKGLRQISDSSVLTQAARDAIAANPKVVADYKSGKLPAIKFLVGQVMRATKGQANPQVVEEALKTELDATN.

This sequence belongs to the GatB/GatE family. GatB subfamily. Heterotrimer of A, B and C subunits.

It carries out the reaction L-glutamyl-tRNA(Gln) + L-glutamine + ATP + H2O = L-glutaminyl-tRNA(Gln) + L-glutamate + ADP + phosphate + H(+). The enzyme catalyses L-aspartyl-tRNA(Asn) + L-glutamine + ATP + H2O = L-asparaginyl-tRNA(Asn) + L-glutamate + ADP + phosphate + 2 H(+). Allows the formation of correctly charged Asn-tRNA(Asn) or Gln-tRNA(Gln) through the transamidation of misacylated Asp-tRNA(Asn) or Glu-tRNA(Gln) in organisms which lack either or both of asparaginyl-tRNA or glutaminyl-tRNA synthetases. The reaction takes place in the presence of glutamine and ATP through an activated phospho-Asp-tRNA(Asn) or phospho-Glu-tRNA(Gln). This Herpetosiphon aurantiacus (strain ATCC 23779 / DSM 785 / 114-95) protein is Aspartyl/glutamyl-tRNA(Asn/Gln) amidotransferase subunit B.